The primary structure comprises 336 residues: Tetraacyldisaccharide 4'-kinase (336 aa).

60–67 (TVGGTGKT) serves as a coordination point for ATP.

This sequence belongs to the LpxK family.

It carries out the reaction a lipid A disaccharide + ATP = a lipid IVA + ADP + H(+). Its pathway is glycolipid biosynthesis; lipid IV(A) biosynthesis; lipid IV(A) from (3R)-3-hydroxytetradecanoyl-[acyl-carrier-protein] and UDP-N-acetyl-alpha-D-glucosamine: step 6/6. Its function is as follows. Transfers the gamma-phosphate of ATP to the 4'-position of a tetraacyldisaccharide 1-phosphate intermediate (termed DS-1-P) to form tetraacyldisaccharide 1,4'-bis-phosphate (lipid IVA). This is Tetraacyldisaccharide 4'-kinase from Pseudomonas fluorescens (strain SBW25).